The sequence spans 326 residues: Nucleoporin Nup37 (326 aa).

7 WD repeats span residues 6–54 (SRNA…FQEE), 61–109 (IQYK…LFTS), 115–154 (NEYK…IWNL), 159–195 (TAHF…FYDL), 199–237 (QAIL…IWDI), 242–282 (YPQN…QFQI), and 287–324 (HPQP…FWVT).

Component of the Nup107-160 subcomplex of the nuclear pore complex (NPC). The Nup107-160 subcomplex includes NUP160, NUP133, NUP107, NUP98, NUP85, NUP43, NUP37, SEH1 and SEC13.

The protein resides in the chromosome. It localises to the centromere. Its subcellular location is the kinetochore. The protein localises to the nucleus. It is found in the nuclear pore complex. In terms of biological role, component of the Nup107-160 subcomplex of the nuclear pore complex (NPC). The Nup107-160 subcomplex is required for the assembly of a functional NPC. The Nup107-160 subcomplex is also required for normal kinetochore microtubule attachment, mitotic progression and chromosome segregation. In Homo sapiens (Human), this protein is Nucleoporin Nup37 (NUP37).